A 147-amino-acid chain; its full sequence is 3-dehydroquinate dehydratase (147 aa).

Residue tyrosine 24 is the Proton acceptor of the active site. Asparagine 75, histidine 81, and aspartate 88 together coordinate substrate. Residue histidine 101 is the Proton donor of the active site. Substrate-binding positions include 102-103 (IS) and arginine 112.

This sequence belongs to the type-II 3-dehydroquinase family. In terms of assembly, homododecamer.

It carries out the reaction 3-dehydroquinate = 3-dehydroshikimate + H2O. It participates in metabolic intermediate biosynthesis; chorismate biosynthesis; chorismate from D-erythrose 4-phosphate and phosphoenolpyruvate: step 3/7. Its function is as follows. Catalyzes a trans-dehydration via an enolate intermediate. In Cereibacter sphaeroides (strain ATCC 17029 / ATH 2.4.9) (Rhodobacter sphaeroides), this protein is 3-dehydroquinate dehydratase.